We begin with the raw amino-acid sequence, 302 residues long: 4-hydroxy-tetrahydrodipicolinate synthase (302 aa).

Thr46 contacts pyruvate. Tyr134 functions as the Proton donor/acceptor in the catalytic mechanism. Lys162 functions as the Schiff-base intermediate with substrate in the catalytic mechanism. Val204 provides a ligand contact to pyruvate.

It belongs to the DapA family. In terms of assembly, homotetramer; dimer of dimers.

The protein resides in the cytoplasm. The enzyme catalyses L-aspartate 4-semialdehyde + pyruvate = (2S,4S)-4-hydroxy-2,3,4,5-tetrahydrodipicolinate + H2O + H(+). It participates in amino-acid biosynthesis; L-lysine biosynthesis via DAP pathway; (S)-tetrahydrodipicolinate from L-aspartate: step 3/4. Its function is as follows. Catalyzes the condensation of (S)-aspartate-beta-semialdehyde [(S)-ASA] and pyruvate to 4-hydroxy-tetrahydrodipicolinate (HTPA). The sequence is that of 4-hydroxy-tetrahydrodipicolinate synthase from Xylella fastidiosa (strain Temecula1 / ATCC 700964).